A 522-amino-acid chain; its full sequence is MEMEEAQEMSQMPGRDSPPPNDVSEENDEAMPIPEDLSASSNLQHNNRGDKEGLACNIKVEARCDEENGLAIDMMMNGEEEEECAEDLRVLDASGAKVNGSHAGGPDSKGPYSSAGGIRLPNGKLKCDICGIVCIGPNVLMVHKRSHTGERPFQCTQCGASFTQKGNLLRHIKLHSGEKPFKCHLCNYACRRRDALSGHLRTHSVGKPHKCAYCGRSYKQRSSLEEHKERCHNYLQCMGLQNSIYTVVKEESNQNEQREDLSQMGSKRALVLDRLANNVAKRKSTMPQKFVGEKRFSNISFEGGPGELMQPHVIDQAINSAINYLGAESLRPLIQTSPTSSDMGVMGSMYPLHKPPAEGHGLSAKDSAAENLLLLAKSKSASSEKDGSPSHSGQDSTDTESNNEEKAGVGASGLIYLTNHITSGVRNGVLPLVKEEQQRQYEAMRASIEIASEGFKVLSGEGEQVRAYRCEHCRILFLDHVMYTIHMGCHGFRDPFECNLCGHRSQDRYEFSSHMTRGEHRY.

Disordered regions lie at residues 1–48 (MEME…HNNR) and 96–115 (AKVN…YSSA). 4 consecutive C2H2-type zinc fingers follow at residues 125 to 147 (LKCD…KRSH), 153 to 175 (FQCT…IKLH), 181 to 203 (FKCH…LRTH), and 209 to 232 (HKCA…ERCH). Residues 379–406 (KSASSEKDGSPSHSGQDSTDTESNNEEK) are disordered. 2 consecutive C2H2-type zinc fingers follow at residues 468–490 (YRCE…MGCH) and 496–520 (FECN…RGEH).

It belongs to the Ikaros C2H2-type zinc-finger protein family. Expression mainly limited to thymus, spleen and pronephros. Very low expression in liver. No expression in testis, brain, eye and muscle.

The protein resides in the nucleus. In terms of biological role, binds and activates the enhancer (delta-A element) of the CD3-delta gene. Functions in the specification and the maturation of the T-lymphocyte. Also interacts with a critical control element in the TDT (terminal deoxynucleotidyltransferase) promoter as well as with the promoters for other genes expressed during early stages of B- and T-cell development. Function is isoform-specific and is modulated by dominant-negative inactive isoforms. The polypeptide is DNA-binding protein Ikaros (ikzf1) (Oncorhynchus mykiss (Rainbow trout)).